The following is an 852-amino-acid chain: Glutamine--tRNA ligase (852 aa).

The tract at residues 1–42 (MGAFGWEQDRGAPFSGRSPRILTRMTDAPRPTAGADAPARPP) is disordered. The interval 1–635 (MGAFGWEQDR…ITLKDTWGKQ (635 aa)) is glutaminyl-tRNA synthetase. The span at 28 to 38 (APRPTAGADAP) shows a compositional bias: low complexity. A 'HIGH' region motif is present at residues 74–84 (PDPSGYAHLGH). L-glutamine contacts are provided by D107 and Y252. The short motif at 308–312 (ITSKR) is the 'KMSKS' region element. Disordered regions lie at residues 533-562 (EGENADVEDDSAGPAEHEAEPGAGQETAPV) and 632-681 (WGKQ…LTPE). The gatB-like stretch occupies residues 636 to 852 (GGGTQQKAEG…LAAALKDALA (217 aa)). Low complexity predominate over residues 664-675 (SSSPAKAHAPKA).

The protein in the N-terminal section; belongs to the class-I aminoacyl-tRNA synthetase family. In the C-terminal section; belongs to the GatB/GatE family. In terms of assembly, monomer.

It localises to the cytoplasm. It carries out the reaction tRNA(Gln) + L-glutamine + ATP = L-glutaminyl-tRNA(Gln) + AMP + diphosphate. In Deinococcus radiodurans (strain ATCC 13939 / DSM 20539 / JCM 16871 / CCUG 27074 / LMG 4051 / NBRC 15346 / NCIMB 9279 / VKM B-1422 / R1), this protein is Glutamine--tRNA ligase.